A 673-amino-acid chain; its full sequence is Elongation factor G 1 (673 aa).

In terms of domain architecture, tr-type G spans K3–L277. GTP contacts are provided by residues A12 to T19, D76 to H80, and N130 to D133.

Belongs to the TRAFAC class translation factor GTPase superfamily. Classic translation factor GTPase family. EF-G/EF-2 subfamily.

Its subcellular location is the cytoplasm. Functionally, catalyzes the GTP-dependent ribosomal translocation step during translation elongation. During this step, the ribosome changes from the pre-translocational (PRE) to the post-translocational (POST) state as the newly formed A-site-bound peptidyl-tRNA and P-site-bound deacylated tRNA move to the P and E sites, respectively. Catalyzes the coordinated movement of the two tRNA molecules, the mRNA and conformational changes in the ribosome. The polypeptide is Elongation factor G 1 (Syntrophomonas wolfei subsp. wolfei (strain DSM 2245B / Goettingen)).